Reading from the N-terminus, the 201-residue chain is Recombination protein RecR (201 aa).

The C4-type zinc-finger motif lies at 59 to 74; sequence CEICGNMDTENICRIC. The Toprim domain occupies 82 to 177; the sequence is SIIAIVETVA…KISRLASGIP (96 aa).

This sequence belongs to the RecR family.

Functionally, may play a role in DNA repair. It seems to be involved in an RecBC-independent recombinational process of DNA repair. It may act with RecF and RecO. This is Recombination protein RecR from Rickettsia peacockii (strain Rustic).